A 116-amino-acid polypeptide reads, in one-letter code: Protein Rev (116 aa).

A phosphoserine; by host CK2 mark is found at S5 and S8. A homomultimerization region spans residues 18-26; the sequence is LIKFLYQSN. Residues 25–49 are disordered; that stretch reads SNPPPSLEGTRQARRNRRRRWRERQ. The Nuclear localization signal and RNA-binding (RRE) signature appears at 34–50; sequence TRQARRNRRRRWRERQR. The segment covering 36-47 has biased composition (basic residues); it reads QARRNRRRRWRE. A Nuclear export signal and binding to XPO1 motif is present at residues 73–84; that stretch reads LPLPPLEKLTLD. Phosphoserine; by host occurs at positions 92 and 99. The disordered stretch occupies residues 92 to 116; that stretch reads SGTQGVGSPQILVESPAILEPGTKE.

It belongs to the HIV-1 REV protein family. In terms of assembly, homomultimer; when bound to the RRE. Multimeric assembly is essential for activity and may involve XPO1. Binds to human KPNB1, XPO1, TNPO1, RANBP5 and IPO7. Interacts with the viral Integrase. Interacts with human KHDRBS1. Interacts with human NAP1; this interaction decreases Rev multimerization and stimulates its activity. Interacts with human DEAD-box helicases DDX3 and DDX24; these interactions may serve for viral RNA export to the cytoplasm and packaging, respectively. Interacts with human PSIP1; this interaction may inhibit HIV-1 DNA integration by promoting dissociation of the Integrase-LEDGF/p75 complex. In terms of processing, asymmetrically arginine dimethylated at one site by host PRMT6. Methylation impairs the RNA-binding activity and export of viral RNA from the nucleus to the cytoplasm. Post-translationally, phosphorylated by protein kinase CK2. Presence of, and maybe binding to the N-terminus of the regulatory beta subunit of CK2 is necessary for CK2-mediated Rev's phosphorylation.

The protein localises to the host nucleus. It is found in the host nucleolus. Its subcellular location is the host cytoplasm. Escorts unspliced or incompletely spliced viral pre-mRNAs (late transcripts) out of the nucleus of infected cells. These pre-mRNAs carry a recognition sequence called Rev responsive element (RRE) located in the env gene, that is not present in fully spliced viral mRNAs (early transcripts). This function is essential since most viral proteins are translated from unspliced or partially spliced pre-mRNAs which cannot exit the nucleus by the pathway used by fully processed cellular mRNAs. Rev itself is translated from a fully spliced mRNA that readily exits the nucleus. Rev's nuclear localization signal (NLS) binds directly to KPNB1/Importin beta-1 without previous binding to KPNA1/Importin alpha-1. KPNB1 binds to the GDP bound form of RAN (Ran-GDP) and targets Rev to the nucleus. In the nucleus, the conversion from Ran-GDP to Ran-GTP dissociates Rev from KPNB1 and allows Rev's binding to the RRE in viral pre-mRNAs. Rev multimerization on the RRE via cooperative assembly exposes its nuclear export signal (NES) to the surface. Rev can then form a complex with XPO1/CRM1 and Ran-GTP, leading to nuclear export of the complex. Conversion from Ran-GTP to Ran-GDP mediates dissociation of the Rev/RRE/XPO1/RAN complex, so that Rev can return to the nucleus for a subsequent round of export. Beside KPNB1, also seems to interact with TNPO1/Transportin-1, RANBP5/IPO5 and IPO7/RANBP7 for nuclear import. The nucleoporin-like HRB/RIP is an essential cofactor that probably indirectly interacts with Rev to release HIV RNAs from the perinuclear region to the cytoplasm. This chain is Protein Rev, found in Human immunodeficiency virus type 1 group M subtype B (strain 89.6) (HIV-1).